The sequence spans 230 residues: Extracellular deoxyribonuclease (230 aa).

The signal sequence occupies residues 1-20 (MFRPLLSLCLALLVSAPAHA).

This sequence belongs to the EndA/NucM nuclease family.

It is found in the secreted. In Aeromonas hydrophila, this protein is Extracellular deoxyribonuclease (dns).